A 406-amino-acid polypeptide reads, in one-letter code: Exodeoxyribonuclease 7 large subunit (406 aa).

The protein belongs to the XseA family. Heterooligomer composed of large and small subunits.

It localises to the cytoplasm. It carries out the reaction Exonucleolytic cleavage in either 5'- to 3'- or 3'- to 5'-direction to yield nucleoside 5'-phosphates.. In terms of biological role, bidirectionally degrades single-stranded DNA into large acid-insoluble oligonucleotides, which are then degraded further into small acid-soluble oligonucleotides. In Desulforudis audaxviator (strain MP104C), this protein is Exodeoxyribonuclease 7 large subunit.